Consider the following 399-residue polypeptide: Transaminase BacF (399 aa).

Pyridoxal 5'-phosphate-binding positions include 103–104 (GK), Tyr128, Asn178, Tyr209, and 236–238 (SFS). Lys239 is modified (N6-(pyridoxal phosphate)lysine). Pyridoxal 5'-phosphate is bound at residue Arg247.

The protein belongs to the class-I pyridoxal-phosphate-dependent aminotransferase family. Homodimer. Pyridoxal 5'-phosphate is required as a cofactor.

The protein localises to the cytoplasm. It participates in antibiotic biosynthesis; bacilysin biosynthesis. Functionally, part of the bacABCDEF operon responsible for the biosynthesis of the nonribosomally synthesized dipeptide antibiotic bacilysin, composed of L-alanine and L-anticapsin. Bacilysin is an irreversible inactivator of the glutaminase domain of glucosamine synthetase. Catalyzes the reductive amination of the C2 ketone of tetrahydro-hydroxyphenylpyruvate (H4HPP), with L-Phe as an amino donor, to yield tetrahydrotyrosine (H4Tyr) diastereomer. D-Phe is not an effective amino donor. BacF associated to BacG converts 3E,7R- and 3Z,7R-ex-H2HPP to 2S,4R,7R- and 2S,4S,7R-H4Tyr, respectively. Given that bacilysin has the 2S,4S stereochemistry in its anticapsin moiety, it is likely that the 2S,4S-H4Tyr is the diastereomer used for the biosynthesis. The sequence is that of Transaminase BacF from Bacillus subtilis (strain 168).